A 690-amino-acid chain; its full sequence is Eukaryotic translation initiation factor 3 subunit B (690 aa).

Positions 1 to 11 (MAKKKSEEHSG) are enriched in basic and acidic residues. Positions 1–33 (MAKKKSEEHSGTDANDSDYQEEPNFDDPPGFVD) are disordered. A compositionally biased stretch (acidic residues) spans 15 to 25 (NDSDYQEEPNF). The RRM domain maps to 57–141 (SVVVVDNIPK…HTFAVNLFTD (85 aa)). WD repeat units follow at residues 207 to 246 (TRER…KIQK), 293 to 331 (DGMS…LLDL), 334 to 369 (IKIP…TLME), 442 to 484 (EIRE…KPSL), and 530 to 575 (PDHF…IKRT). A coiled-coil region spans residues 595–645 (EEKQKEIKKNLKKYYAAFEQKDRLRLTRASKELLEKRSQLRETFMEYRNKR).

It belongs to the eIF-3 subunit B family. As to quaternary structure, component of the eukaryotic translation initiation factor 3 (eIF-3) complex. The eIF-3 complex interacts with pix. Interacts with mxt.

The protein resides in the cytoplasm. Functionally, RNA-binding component of the eukaryotic translation initiation factor 3 (eIF-3) complex, which is involved in protein synthesis of a specialized repertoire of mRNAs and, together with other initiation factors, stimulates binding of mRNA and methionyl-tRNAi to the 40S ribosome. The eIF-3 complex specifically targets and initiates translation of a subset of mRNAs involved in cell proliferation. The sequence is that of Eukaryotic translation initiation factor 3 subunit B from Drosophila melanogaster (Fruit fly).